A 637-amino-acid polypeptide reads, in one-letter code: tRNA uridine 5-carboxymethylaminomethyl modification enzyme MnmG (637 aa).

Residues 15-20 (GAGHAG), V127, and S182 each bind FAD. 274–288 (GPRYCPSIEDKVVRF) contributes to the NAD(+) binding site. Q371 serves as a coordination point for FAD.

This sequence belongs to the MnmG family. In terms of assembly, homodimer. Heterotetramer of two MnmE and two MnmG subunits. FAD serves as cofactor.

It localises to the cytoplasm. Functionally, NAD-binding protein involved in the addition of a carboxymethylaminomethyl (cmnm) group at the wobble position (U34) of certain tRNAs, forming tRNA-cmnm(5)s(2)U34. This Heliobacterium modesticaldum (strain ATCC 51547 / Ice1) protein is tRNA uridine 5-carboxymethylaminomethyl modification enzyme MnmG.